The sequence spans 301 residues: Phosducin-like protein (301 aa).

Thr2 is subject to N-acetylthreonine. Positions 17–60 (YSTSEDEDSDHEDKDRGRGAPAISSTPAEAELAGEGISINTGPK) are disordered. A phosphoserine mark is found at Ser20, Ser25, Ser226, Ser293, and Ser296. In terms of domain architecture, Phosducin spans 36–299 (APAISSTPAE…TCHSEDSDLE (264 aa)). The thioredoxin fold stretch occupies residues 158–301 (FKQVFEIPSG…HSEDSDLEID (144 aa)).

Belongs to the phosducin family. As to quaternary structure, forms a complex with the beta and gamma subunits of the GTP-binding protein, transducin. Interacts with the CCT chaperonin complex.

The protein localises to the cell projection. The protein resides in the cilium. In terms of biological role, functions as a co-chaperone for CCT in the assembly of heterotrimeric G protein complexes, facilitates the assembly of both Gbeta-Ggamma and RGS-Gbeta5 heterodimers. Also acts as a positive regulator of hedgehog signaling and regulates ciliary function. This chain is Phosducin-like protein (Pdcl), found in Mus musculus (Mouse).